A 309-amino-acid polypeptide reads, in one-letter code: Ribonuclease Z (309 aa).

Zn(2+)-binding residues include histidine 64, histidine 66, aspartate 68, histidine 69, histidine 141, aspartate 209, and histidine 267. The Proton acceptor role is filled by aspartate 68.

Belongs to the RNase Z family. In terms of assembly, homodimer. It depends on Zn(2+) as a cofactor.

It carries out the reaction Endonucleolytic cleavage of RNA, removing extra 3' nucleotides from tRNA precursor, generating 3' termini of tRNAs. A 3'-hydroxy group is left at the tRNA terminus and a 5'-phosphoryl group is left at the trailer molecule.. Functionally, zinc phosphodiesterase, which displays some tRNA 3'-processing endonuclease activity. Probably involved in tRNA maturation, by removing a 3'-trailer from precursor tRNA. The sequence is that of Ribonuclease Z from Picrophilus torridus (strain ATCC 700027 / DSM 9790 / JCM 10055 / NBRC 100828 / KAW 2/3).